Here is a 360-residue protein sequence, read N- to C-terminus: Phosphoserine aminotransferase (360 aa).

Arg41 serves as a coordination point for L-glutamate. Pyridoxal 5'-phosphate-binding residues include Trp101, Thr152, Asp172, and Gln195. Residue Lys196 is modified to N6-(pyridoxal phosphate)lysine. Pyridoxal 5'-phosphate is bound at residue Asn237–Thr238.

It belongs to the class-V pyridoxal-phosphate-dependent aminotransferase family. SerC subfamily. In terms of assembly, homodimer. The cofactor is pyridoxal 5'-phosphate.

Its subcellular location is the cytoplasm. It carries out the reaction O-phospho-L-serine + 2-oxoglutarate = 3-phosphooxypyruvate + L-glutamate. It catalyses the reaction 4-(phosphooxy)-L-threonine + 2-oxoglutarate = (R)-3-hydroxy-2-oxo-4-phosphooxybutanoate + L-glutamate. The protein operates within amino-acid biosynthesis; L-serine biosynthesis; L-serine from 3-phospho-D-glycerate: step 2/3. Its pathway is cofactor biosynthesis; pyridoxine 5'-phosphate biosynthesis; pyridoxine 5'-phosphate from D-erythrose 4-phosphate: step 3/5. In terms of biological role, catalyzes the reversible conversion of 3-phosphohydroxypyruvate to phosphoserine and of 3-hydroxy-2-oxo-4-phosphonooxybutanoate to phosphohydroxythreonine. This is Phosphoserine aminotransferase from Burkholderia cenocepacia (strain HI2424).